A 379-amino-acid polypeptide reads, in one-letter code: Eukaryotic translation initiation factor 3 subunit H (379 aa).

The region spanning 17-170 (VQIDSLVVMK…IRAYRLSTKA (154 aa)) is the MPN domain. A compositionally biased stretch (basic and acidic residues) spans 280 to 291 (RQAENEQREARG). The interval 280–300 (RQAENEQREARGEPPLSFDDI) is disordered.

Belongs to the eIF-3 subunit H family. In terms of assembly, component of the eukaryotic translation initiation factor 3 (eIF-3) complex.

It is found in the cytoplasm. In terms of biological role, component of the eukaryotic translation initiation factor 3 (eIF-3) complex, which is involved in protein synthesis of a specialized repertoire of mRNAs and, together with other initiation factors, stimulates binding of mRNA and methionyl-tRNAi to the 40S ribosome. The eIF-3 complex specifically targets and initiates translation of a subset of mRNAs involved in cell proliferation. The sequence is that of Eukaryotic translation initiation factor 3 subunit H from Brugia malayi (Filarial nematode worm).